Here is a 594-residue protein sequence, read N- to C-terminus: Dictomallein-4 (594 aa).

An N-terminal signal peptide occupies residues 1–18 (MKLVLIFLIINFLLIINC). The region spanning 147–408 (PDVSQDYTLK…QNYFKNSIYY (262 aa)) is the Peptidase M66 domain. H300 is a binding site for Zn(2+). E301 is an active-site residue. Residues H304 and H310 each coordinate Zn(2+).

This sequence belongs to the dictomallein family. Zn(2+) is required as a cofactor.

The protein resides in the secreted. This Dictyostelium discoideum (Social amoeba) protein is Dictomallein-4 (dtmlD).